The chain runs to 212 residues: Floral homeotic protein PMADS 2 (212 aa).

Residues 3–58 (RGKIEIKRIENSSNRQVTYSKRRNGIIKKAKEITVLCDAKVSLIIFGNSGKMHEYC) enclose the MADS-box domain. In terms of domain architecture, K-box spans 84-170 (HENLSNEIDR…QYALHQKEMA (87 aa)).

As to expression, predominantly expressed in petals and stamens, less in carpels and sepals.

It localises to the nucleus. Functionally, transcription factor involved in the genetic control of flower development. This Petunia hybrida (Petunia) protein is Floral homeotic protein PMADS 2 (PMADS2).